The following is a 633-amino-acid chain: MNLEILELFNGHIDNIPNILPHQLATLDYLLRTILDHNESVLLFHIMGSGKTIIALLFALIVSKFKKVYILVPNINILNIFTYNLDLATNLINTEYVIENIHIYSTINFYSLNYNDNVVNYNALSKYNDSIFIIDEAHNIFGNNTGELMTIIKNKNKVPFLLLSGSPITNTPITLSNIISIMSDEGINFNDIIIQGKKVFQIILNEKGVSVLKNILKNKISYYELCDTELPSIIFHGKEFLDTKVVYCKMSKLQETDYINVRKLCNNEMFEKNMTNVSLAVLGPLNLANSLELLFVEQDKELYPNLKINDGVLYGDELTKLNISSKFKYFIDTIGNLTGKNFIYFSNSTYGGLVIKYIMLNNGYSEYAGSQGTNPKMINGHLKTFAIVTSKMKSSLEDLLEVYNSPGNDNGEKIMFLFSSNIMSESYTLKEVRNIWFMTIPDTFSQYNQILGRSIRKFSYKDVSKPVNVYLLATVYSDFNDTITSLDDYSIDDINTLPFDIKKLLYLKFKTKETKRIYSILKDLSINYRSSPHPYITDVVLGELVRQFFYHNSRVSINDAKLFKMVNSIFKSKEKTQKYIEKITDDHFFVTNKVFEKSLLYKHKNDIIVVPFNLLFTEYSWMINFRKELNVVV.

The region spanning 32-185 is the Helicase ATP-binding domain; sequence RTILDHNESV…SNIISIMSDE (154 aa). 45 to 52 serves as a coordination point for ATP; it reads HIMGSGKT. Positions 135-138 match the DEXH box motif; the sequence is DEAH. The 180-residue stretch at 326 to 505 folds into the Helicase C-terminal domain; sequence KFKYFIDTIG…TLPFDIKKLL (180 aa).

Belongs to the helicase family. VETF subfamily. In terms of assembly, heterodimer of a 70 kDa and a 82 kDa subunit. Part of the early transcription complex composed of ETF, RAP94, and the DNA-directed RNA polymerase.

It is found in the virion. In terms of biological role, acts with RNA polymerase to initiate transcription from early gene promoters. Is recruited by the RPO-associated protein of 94 kDa (RAP94) to form the early transcription complex, which also contains the core RNA polymerase. ETF heterodimer binds to early gene promoters. The polypeptide is Early transcription factor 70 kDa subunit (VETFS) (Vertebrata (FPV)).